We begin with the raw amino-acid sequence, 826 residues long: E3 ubiquitin ligase PARAQUAT TOLERANCE 3 (826 aa).

The DWNN domain maps to Ile3 to Pro76. The CCHC-type zinc-finger motif lies at Cys203 to Cys216. Residue Ser278 is modified to Phosphoserine. An RING-type; degenerate zinc finger spans residues Cys288–Cys326. 3 stretches are compositionally biased toward polar residues: residues Ser356–Gln365, Pro396–Lys406, and Asn435–Pro454. Disordered regions lie at residues Ser356 to Lys406, Asn435 to Tyr488, and His585 to Ala826. Ser397 carries the phosphoserine modification. Residues Met588–Arg624 show a composition bias toward basic and acidic residues. The span at Ile625–Pro635 shows a compositional bias: polar residues. Over residues Asp651–Ser667 the composition is skewed to basic and acidic residues. 2 short sequence motifs (nuclear localization signal) span residues Ser668 to Pro675 and Asp695 to Arg702. Basic and acidic residues predominate over residues Arg680–Arg706. Positions Phe790–Arg799 are enriched in basic residues. Ser800 carries the post-translational modification Phosphoserine. A compositionally biased stretch (basic and acidic residues) spans Gly809 to Ala826.

Interacts with PRMT13/PRMT4B in the nucleus. Expressed constitutively in both shoot and root tissues.

The protein localises to the nucleus. It catalyses the reaction S-ubiquitinyl-[E2 ubiquitin-conjugating enzyme]-L-cysteine + [acceptor protein]-L-lysine = [E2 ubiquitin-conjugating enzyme]-L-cysteine + N(6)-ubiquitinyl-[acceptor protein]-L-lysine.. Its function is as follows. E3 ubiquitin ligase acting as a negative regulator of oxidative stress tolerance, probably by mediating 26S proteasome-mediated degradation of PRMT13/PRMT4B, thus preventing APX1 and GPX1 accumulation via the reduction of histone H3 methylation (H3R17me2a). Confers sensitivity to cadmium CdCl(2) and salt NaCl stresses. This is E3 ubiquitin ligase PARAQUAT TOLERANCE 3 from Arabidopsis thaliana (Mouse-ear cress).